The primary structure comprises 271 residues: MNSPLAPVGVFDSGVGGLTVARAIIDQLPDEDIVYVGDTGNGPYGPLTIPEIRAHALAIGDDLVGRGVKALVIACNSASSACLRDARERYQVPVVEVILPAVRRAVAATRNGRIGVIGTRATITSHAYQDAFAAARDTEITAVACPRFVDFVERGVTSGRQVLGLAQGYLEPLQRAEVDTLVLGCTHYPLLSGLIQLAMGENVTLVSSAEETAKEVVRVLTEIDLLRPHDAPPATRIFEATGDPEAFTKLAARFLGPVLGGVQPVHPSRIH.

Substrate-binding positions include Asp-12–Ser-13 and Tyr-44–Gly-45. Residue Cys-75 is the Proton donor/acceptor of the active site. Residue Asn-76 to Ser-77 coordinates substrate. The active-site Proton donor/acceptor is the Cys-185. Residue Thr-186–His-187 participates in substrate binding.

Belongs to the aspartate/glutamate racemases family.

The enzyme catalyses L-glutamate = D-glutamate. It functions in the pathway cell wall biogenesis; peptidoglycan biosynthesis. Provides the (R)-glutamate required for cell wall biosynthesis. The sequence is that of Glutamate racemase from Mycobacterium bovis (strain ATCC BAA-935 / AF2122/97).